The following is a 197-amino-acid chain: CASP-like protein 1B1 (197 aa).

Position 2 is an N-acetylalanine (A2). Topologically, residues A2–K17 are cytoplasmic. The helical transmembrane segment at I18 to G38 threads the bilayer. Over L39–A69 the chain is Extracellular. A helical transmembrane segment spans residues F70–L90. The Cytoplasmic segment spans residues Q91–S106. Residues V107–F127 traverse the membrane as a helical segment. Residues M128–A156 lie on the Extracellular side of the membrane. The chain crosses the membrane as a helical span at residues G157–I177. The Cytoplasmic segment spans residues S178–P197.

Belongs to the Casparian strip membrane proteins (CASP) family. As to quaternary structure, homodimer and heterodimers.

It localises to the cell membrane. This is CASP-like protein 1B1 from Arabidopsis thaliana (Mouse-ear cress).